We begin with the raw amino-acid sequence, 187 residues long: Peptidyl-tRNA hydrolase (187 aa).

Y14 lines the tRNA pocket. H19 acts as the Proton acceptor in catalysis. Positions 60 and 62 each coordinate tRNA.

This sequence belongs to the PTH family. As to quaternary structure, monomer.

It localises to the cytoplasm. It carries out the reaction an N-acyl-L-alpha-aminoacyl-tRNA + H2O = an N-acyl-L-amino acid + a tRNA + H(+). Functionally, hydrolyzes ribosome-free peptidyl-tRNAs (with 1 or more amino acids incorporated), which drop off the ribosome during protein synthesis, or as a result of ribosome stalling. Its function is as follows. Catalyzes the release of premature peptidyl moieties from peptidyl-tRNA molecules trapped in stalled 50S ribosomal subunits, and thus maintains levels of free tRNAs and 50S ribosomes. This is Peptidyl-tRNA hydrolase from Pseudothermotoga lettingae (strain ATCC BAA-301 / DSM 14385 / NBRC 107922 / TMO) (Thermotoga lettingae).